The chain runs to 536 residues: G-protein coupled receptor Mth2 (536 aa).

5 disulfide bridges follow: Cys17–Cys71, Cys73–Cys78, Cys82–Cys177, Cys83–Cys96, and Cys138–Cys197. N-linked (GlcNAc...) asparagine glycans are attached at residues Asn24 and Asn33. 5 N-linked (GlcNAc...) asparagine glycosylation sites follow: Asn103, Asn113, Asn118, Asn159, and Asn184. A helical membrane pass occupies residues 212 to 232; the sequence is YAMMFSIPFMMLTIAVYLLIP. Over 233-241 the chain is Cytoplasmic; it reads ELRNQHGKS. Residues 242 to 262 form a helical membrane-spanning segment; the sequence is LVCYLIGLTVGYSSLCYVQLY. Residues 263 to 273 are Extracellular-facing; that stretch reads QVDATGVTCKV. A helical transmembrane segment spans residues 274 to 294; the sequence is FGYTAYFFFMGAYMWLSVISF. At 295–314 the chain is on the cytoplasmic side; it reads DLWHNFRGTRGINRFQEKKR. Residues 315 to 335 traverse the membrane as a helical segment; it reads FLFYSLYSWGIALVFLAFTYC. At 336-365 the chain is on the extracellular side; that stretch reads AQQLSNLPDNLKPGIGDGVYCWLDMSNWAA. A helical membrane pass occupies residues 366 to 386; that stretch reads MIYFYGPILAIVVANTIMFIM. The Cytoplasmic segment spans residues 387–417; it reads TAIKIHGVQREMARIIASENSTKNLRTEKDK. Residues 418–438 traverse the membrane as a helical segment; that stretch reads FGLFLRLFLIMGITWLTELIS. Over 439-449 the chain is Extracellular; the sequence is YFVGSDKGWSK. The helical transmembrane segment at 450–470 threads the bilayer; it reads LFYISDLANAMQGFLIFMLFV. Over 471–536 the chain is Cytoplasmic; sequence MKKKVKHLIT…VDPQKTTIFR (66 aa). Residues 487–506 are disordered; it reads RDGSNQRQSQYSTKTTSSSV. A compositionally biased stretch (low complexity) spans 492–505; sequence QRQSQYSTKTTSSS.

This sequence belongs to the G-protein coupled receptor 2 family. Mth subfamily. Homodimer.

The protein localises to the cell membrane. Its function is as follows. Involved in biological aging and stress response. Essential for adult survival. The sequence is that of G-protein coupled receptor Mth2 (mth2) from Drosophila simulans (Fruit fly).